Here is an 85-residue protein sequence, read N- to C-terminus: U4-theraphotoxin-Hhn1a (85 aa).

Positions 1–22 (MKVTLISILTCAAVLVLHTTAA) are cleaved as a signal peptide. Positions 23–48 (EELEAESQLMEVGMPDTELAAVDEER) are excised as a propeptide. 3 disulfide bridges follow: cysteine 52/cysteine 66, cysteine 56/cysteine 77, and cysteine 71/cysteine 82.

This sequence belongs to the neurotoxin 12 (Hwtx-2) family. 02 (Hwtx-2) subfamily. As to quaternary structure, monomer. As to expression, expressed by the venom gland.

The protein localises to the secreted. Functionally, neurotoxin active on both insects and mammals. In Cyriopagopus hainanus (Chinese bird spider), this protein is U4-theraphotoxin-Hhn1a.